The sequence spans 671 residues: Gametogenetin-binding protein 2-like (671 aa).

Disordered stretches follow at residues 372 to 489 (REQK…ARVQ) and 532 to 562 (VRDSGYGSDPPSHAGSRTSSAISSPEGSEVS). Positions 373-384 (EQKKLKKKKKKD) are enriched in basic residues. Over residues 385–395 (EKKNLLHRQCD) the composition is skewed to basic and acidic residues. A compositionally biased stretch (acidic residues) spans 396–420 (DTEANESDEEEEELRNEELDLEEES). Over residues 455-472 (TKSKPKKQSKKKKQKKAA) the composition is skewed to basic residues. 2 stretches are compositionally biased toward polar residues: residues 476–486 (MGNQKQMQATA) and 546–557 (GSRTSSAISSPE).

This chain is Gametogenetin-binding protein 2-like, found in Drosophila melanogaster (Fruit fly).